A 148-amino-acid polypeptide reads, in one-letter code: Probable transcriptional regulator SyrB (148 aa).

The disordered stretch occupies residues 1 to 58; it reads MADESNTGPVAAAEAVAETQAPAGKRKSSSRRQRTAAGQVAESKTTAKPKRYSETERA. Positions 7-23 are enriched in low complexity; the sequence is TGPVAAAEAVAETQAPA. The segment covering 24-34 has biased composition (basic residues); the sequence is GKRKSSSRRQR.

This sequence belongs to the SyrB family.

Responsible for the repression of SyrM activity. The sequence is that of Probable transcriptional regulator SyrB (syrB) from Sinorhizobium fredii (strain NBRC 101917 / NGR234).